We begin with the raw amino-acid sequence, 195 residues long: dITP/XTP pyrophosphatase (195 aa).

Residue 9–14 (TNNQGK) participates in substrate binding. The Mg(2+) site is built by glutamate 39 and aspartate 68. The Proton acceptor role is filled by aspartate 68. Substrate contacts are provided by residues serine 69, 146-149 (FGYD), lysine 169, and 174-175 (HR).

Belongs to the HAM1 NTPase family. In terms of assembly, homodimer. Mg(2+) is required as a cofactor.

The catalysed reaction is XTP + H2O = XMP + diphosphate + H(+). It catalyses the reaction dITP + H2O = dIMP + diphosphate + H(+). The enzyme catalyses ITP + H2O = IMP + diphosphate + H(+). Functionally, pyrophosphatase that catalyzes the hydrolysis of nucleoside triphosphates to their monophosphate derivatives, with a high preference for the non-canonical purine nucleotides XTP (xanthosine triphosphate), dITP (deoxyinosine triphosphate) and ITP. Seems to function as a house-cleaning enzyme that removes non-canonical purine nucleotides from the nucleotide pool, thus preventing their incorporation into DNA/RNA and avoiding chromosomal lesions. The protein is dITP/XTP pyrophosphatase of Gloeobacter violaceus (strain ATCC 29082 / PCC 7421).